The sequence spans 103 residues: Integration host factor subunit beta (103 aa).

A disordered region spans residues 59–82 (RLGRNPKTGESVALPGKHVPHFKP).

The protein belongs to the bacterial histone-like protein family. Heterodimer of an alpha and a beta chain.

In terms of biological role, this protein is one of the two subunits of integration host factor, a specific DNA-binding protein that functions in genetic recombination as well as in transcriptional and translational control. The protein is Integration host factor subunit beta of Xanthomonas oryzae pv. oryzae (strain MAFF 311018).